The chain runs to 57 residues: Defensin-like protein 302 (57 aa).

3 cysteine pairs are disulfide-bonded: Cys19–Cys39, Cys26–Cys44, and Cys32–Cys46.

This sequence belongs to the DEFL family.

In Arabidopsis thaliana (Mouse-ear cress), this protein is Defensin-like protein 302.